Consider the following 173-residue polypeptide: MPSSNNKDNFLDKAFTVIAEGIVKMMPIAAKEKQAYIYYREGFAAQNNGDYSEALENYEESLKLEENAIDRGETLKNMAIIYMSNGDEDKALDTYQKALEQNPKQPSCLKNMGLIYEKRGRALQQNGKQDESDIWFDKAAEVWTKAVRLYPGGYLDIENWLKTTGRSKVDIYL.

TPR repeat units follow at residues 35–68 (AYIY…EENA), 72–105 (GETL…NPKQ), and 120–153 (GRAL…YPGG).

This sequence belongs to the Ycf3 family.

It localises to the cellular thylakoid membrane. Essential for the assembly of the photosystem I (PSI) complex. May act as a chaperone-like factor to guide the assembly of the PSI subunits. The sequence is that of Photosystem I assembly protein Ycf3 from Prochlorococcus marinus (strain SARG / CCMP1375 / SS120).